A 199-amino-acid polypeptide reads, in one-letter code: Imidazoleglycerol-phosphate dehydratase (199 aa).

It belongs to the imidazoleglycerol-phosphate dehydratase family.

The protein resides in the cytoplasm. The catalysed reaction is D-erythro-1-(imidazol-4-yl)glycerol 3-phosphate = 3-(imidazol-4-yl)-2-oxopropyl phosphate + H2O. The protein operates within amino-acid biosynthesis; L-histidine biosynthesis; L-histidine from 5-phospho-alpha-D-ribose 1-diphosphate: step 6/9. This Acidithiobacillus ferrooxidans (strain ATCC 53993 / BNL-5-31) (Leptospirillum ferrooxidans (ATCC 53993)) protein is Imidazoleglycerol-phosphate dehydratase.